We begin with the raw amino-acid sequence, 463 residues long: MPAMSQNPPLLRPDLAPAPIFDTSRREGQPTIGMVSLGCPKALVDSERILTRLRAEGYAISPDYKGAGAVIVNTCGFLDSAKAESLQAIGEALAENGKVIVTGCLGAEPEYITGAHPSVLAVTGPQQYEQVLDAVHHAVPPSPDPFVDLLPASGVKLTPRHYSYLKISEGCNHACKFCIIPDMRGKLVSRPAHAVIREAEKLVEAGVRELLVISQDTSAYGLDRKFATERGHRAHITDLARDLGQLGAWVRLHYVYPYPHVRDLIPLMAAHGESGGLVLPYLDIPFQHAHPDVLKRMARPAAAARTLDEIAAWRAVCPDITLRSTFIVGYPGETEAEFQTLLDWLDEAQLDRVGCFQYENVKGARANDLPDHVPDDVKQDRWDRFMQKAQAISEAKLAAKVGHRIEVIVDAVDGDGATCRTKADAPEIDGNLFIDEGFEDLAPGDIVSVTVDEAGEYDLWGRL.

The segment at 1–26 (MPAMSQNPPLLRPDLAPAPIFDTSRR) is disordered. Over residues 8–19 (PPLLRPDLAPAP) the composition is skewed to low complexity. The MTTase N-terminal domain maps to 30 to 140 (PTIGMVSLGC…VLDAVHHAVP (111 aa)). [4Fe-4S] cluster contacts are provided by cysteine 39, cysteine 75, cysteine 104, cysteine 171, cysteine 175, and cysteine 178. The region spanning 157–395 (LTPRHYSYLK…MQKAQAISEA (239 aa)) is the Radical SAM core domain. The region spanning 398–463 (AAKVGHRIEV…AGEYDLWGRL (66 aa)) is the TRAM domain.

It belongs to the methylthiotransferase family. RimO subfamily. Requires [4Fe-4S] cluster as cofactor.

It is found in the cytoplasm. The enzyme catalyses L-aspartate(89)-[ribosomal protein uS12]-hydrogen + (sulfur carrier)-SH + AH2 + 2 S-adenosyl-L-methionine = 3-methylsulfanyl-L-aspartate(89)-[ribosomal protein uS12]-hydrogen + (sulfur carrier)-H + 5'-deoxyadenosine + L-methionine + A + S-adenosyl-L-homocysteine + 2 H(+). Functionally, catalyzes the methylthiolation of an aspartic acid residue of ribosomal protein uS12. This chain is Ribosomal protein uS12 methylthiotransferase RimO, found in Paracoccus denitrificans (strain Pd 1222).